The sequence spans 141 residues: Galactose-6-phosphate isomerase subunit LacA (141 aa).

This sequence belongs to the LacAB/RpiB family. In terms of assembly, heteromultimeric protein consisting of LacA and LacB.

It carries out the reaction aldehydo-D-galactose 6-phosphate = keto-D-tagatose 6-phosphate. It participates in carbohydrate metabolism; D-galactose 6-phosphate degradation; D-tagatose 6-phosphate from D-galactose 6-phosphate: step 1/1. The chain is Galactose-6-phosphate isomerase subunit LacA from Streptococcus pneumoniae (strain ATCC 700669 / Spain 23F-1).